The primary structure comprises 2822 residues: Piezo-type mechanosensitive ion channel component 2 (2822 aa).

The Cytoplasmic portion of the chain corresponds to 1-12 (MASEVVCGLIFR). The helical transmembrane segment at 13-24 (LLLPICLAVACA) threads the bilayer. The Extracellular portion of the chain corresponds to 25–30 (FRYNGL). The helical transmembrane segment at 31 to 43 (SFVYLIYLLLIPL) threads the bilayer. Residues 44-50 (FSEPTKA) are Cytoplasmic-facing. Residues 51–76 (TMQGHTGRLLQSLCITSLSFLLLHII) traverse the membrane as a helical segment. Over 77–122 (FHITLASLEAQHRITPAYNCSTWEKTFRQIGFESLKGADAGNGIRV) the chain is Extracellular. N-linked (GlcNAc...) asparagine glycosylation is present at N95. Residues 123–141 (FVPDIGMFIASLTIWLVCR) traverse the membrane as a helical segment. Residues 142–221 (TIVKKPDTEE…KEFIGNMITT (80 aa)) lie on the Cytoplasmic side of the membrane. The helical transmembrane segment at 222-237 (AGKVVVTILLGSSGMM) threads the bilayer. The Extracellular portion of the chain corresponds to 238 to 240 (LPS). Residues 241–258 (LTSAVYFFVFLGLCTWWS) form a helical membrane-spanning segment. Over 259 to 264 (WCRTFD) the chain is Cytoplasmic. Residues 265–287 (PLLFGCLCVLLAIFTAGHLIGLY) traverse the membrane as a helical segment. The Extracellular segment spans residues 288–335 (LYQFQFFQEAVPPNDYYARLFGIKSVIQTDCASTWKIIVNPDLSWYHH). The helical transmembrane segment at 336-355 (ANPILLLVMYYTLATLIRIW) threads the bilayer. Residues 356–492 (LQEPLVQEEM…SVRMHAMVAV (137 aa)) lie on the Cytoplasmic side of the membrane. The segment at 450–481 (YRWEPSEESSEKKEEEEDKREDSEGEGSQEEK) is disordered. Residues 455–482 (SEESSEKKEEEEDKREDSEGEGSQEEKR) adopt a coiled-coil conformation. The segment covering 463 to 477 (EEEEDKREDSEGEGS) has biased composition (acidic residues). Residues 493-514 (FQFIMKQSYICALIAMMAWSIT) form a helical membrane-spanning segment. Over 515 to 519 (YHSWL) the chain is Extracellular. Residues 520-531 (TFVLLIWSCTLW) traverse the membrane as a helical segment. Topologically, residues 532–535 (MIRN) are cytoplasmic. A helical transmembrane segment spans residues 536-562 (RRKYAMISSPFMVVYANLLLVLQYIWS). Residues 563-583 (FELPEIKKVPGFLEKKEPGEL) are Extracellular-facing. Residues 584–614 (ASKILFTITFWLLLRQHLTEQKALREKEALL) traverse the membrane as a helical segment. The Cytoplasmic portion of the chain corresponds to 615–689 (SEVKIGSQEL…GNLVVALFIK (75 aa)). 2 stretches are compositionally biased toward acidic residues: residues 624–633 (LEEKEDEELQ) and 643–652 (EKEEEEEEEI). Positions 624–668 (LEEKEDEELQDVQVEGEPTEKEEEEEEEIKEERHEVKKEEEEEVE) are disordered. Over residues 653 to 662 (KEERHEVKKE) the composition is skewed to basic and acidic residues. The helical transmembrane segment at 690 to 703 (YWIYVCGGMFFFVS) threads the bilayer. Residues 704 to 709 (FEGKIV) lie on the Extracellular side of the membrane. The helical transmembrane segment at 710-728 (MYKIIYMVLFLFCVALYQV) threads the bilayer. Topologically, residues 729–737 (HYEWWRKIL) are cytoplasmic. The chain crosses the membrane as a helical span at residues 738–757 (KYFWMSVVIYTMLVLIFIYT). At 758–789 (YQFENFPGLWQNMTGLKKEKLEDLGLKQFTVA) the chain is on the extracellular side. A helical membrane pass occupies residues 790 to 811 (ELFTRIFIPTSFLLVCILHLHY). The Cytoplasmic segment spans residues 812-957 (FHDRFLELTD…QVFMWWILEL (146 aa)). Residue S856 is modified to Phosphoserine. The segment covering 875 to 901 (QKLAESGEERPEECVKKTEKGEAGKDS) has biased composition (basic and acidic residues). The tract at residues 875-919 (QKLAESGEERPEECVKKTEKGEAGKDSDESEEEEDEEEESEEEES) is disordered. A compositionally biased stretch (acidic residues) spans 902–919 (DESEEEEDEEEESEEEES). Residues 958 to 973 (HIIKIVSSYIIWVTVK) form a helical membrane-spanning segment. At 974-979 (EVSLFN) the chain is on the extracellular side. A helical transmembrane segment spans residues 980–989 (YVFLISWAFA). Residues 990 to 997 (LPYAKLRR) lie on the Cytoplasmic side of the membrane. A helical membrane pass occupies residues 998-1018 (AASSVCTVWTCVIIVCKMLYQ). The Extracellular segment spans residues 1019–1074 (LQTIKPENFSVNCSLPNENQTNIPLHELNKSLLYSAPVDPTEWVGLRKSSPLLVYL). An N-linked (GlcNAc...) asparagine glycan is attached at N1030. C1031 and C1209 are oxidised to a cystine. The chain crosses the membrane as a helical span at residues 1075–1099 (RNNLLMLAILAFEVTVYRHQEYYRG). Residues 1100–1140 (RNNLTAPVSKTIFHDITRLHLDDGLINCAKYFVNYFFYKFG) lie on the Cytoplasmic side of the membrane. A helical transmembrane segment spans residues 1141 to 1155 (LETCFLMSVNVIGQR). At 1156 to 1157 (MD) the chain is on the extracellular side. A helical transmembrane segment spans residues 1158–1171 (FYAMIHACWLIGVL). Residues 1172–1182 (YRRRRKAIAEV) lie on the Cytoplasmic side of the membrane. The helical transmembrane segment at 1183 to 1202 (WPKYCCFLACIITFQYFVCI) threads the bilayer. Residues 1203–1239 (GIPPAPCRDYPWRFKGAYFNDNIIKWLYFPDFIVRPN) lie on the Extracellular side of the membrane. The chain crosses the membrane as a helical span at residues 1240-1260 (PVFLVYDFMLLLCASLQRQIF). The Cytoplasmic portion of the chain corresponds to 1261–1314 (EDENKAAVRIMAGDNVEICMNLDAASFSQHNPVPDFIHCRSYLDMSKVIIFSYL). A helical transmembrane segment spans residues 1315-1327 (FWFVLTIIFITGT). At 1328-1333 (TRISIF) the chain is on the extracellular side. A helical transmembrane segment spans residues 1334-1346 (CMGYLVACFYFLL). At 1347–1355 (FGGDLLLKP) the chain is on the cytoplasmic side. The helical transmembrane segment at 1356–1381 (IKSILRYWDWLIAYNVFVITMKNILS) threads the bilayer. The Extracellular portion of the chain corresponds to 1382 to 1430 (IGACGYIGALVRNSCWLIQAFSLACTVKGYQMPEDDSRCKLPSGEAGII). Residues 1431 to 1447 (WDSICFAFLLLQRRVFM) traverse the membrane as a helical segment. Residues 1448–1991 (SYYFLHVVAD…YAMYNTLVAR (544 aa)) are Cytoplasmic-facing. Positions 1475 to 1515 (TIVKAVKARIEEEKKSMDQLKRQMDRIKARQQKYKKGKERM) form a coiled coil. 2 disordered regions span residues 1505-1551 (QQKY…KKKQ) and 1611-1653 (LRQR…KKSD). The segment covering 1611–1621 (LRQRRKEKKKL) has biased composition (basic residues). Residues 1622–1633 (AREEQKERRKGS) are compositionally biased toward basic and acidic residues. Residues 1992–2006 (SEMVCYFVIILNHMT) form a helical membrane-spanning segment. Topologically, residues 2007–2013 (SASIITL) are extracellular. The helical transmembrane segment at 2014-2025 (LLPILIFLWAML) threads the bilayer. Over 2026–2031 (SVPRPS) the chain is Cytoplasmic. The helical transmembrane segment at 2032 to 2053 (RRFWMMAIVYTEVAIVVKYFFQ) threads the bilayer. Residues 2054–2086 (FGFFPWNKDLEIYKERPYFPPNIIGVEKKEGYV) are Extracellular-facing. The helical transmembrane segment at 2087 to 2105 (LYDLIQLLALFFHRSILKC) threads the bilayer. Residues 2106–2259 (HGLWDEDDIV…HPDYSAVTDV (154 aa)) are Cytoplasmic-facing. 2 disordered regions span residues 2120–2139 (DKEG…GSSD) and 2164–2205 (IRRK…SVLS). Residues 2170-2197 (CSSSQISPRSSFSSNRSKRGSTSTRNSS) are compositionally biased toward low complexity. A helical transmembrane segment spans residues 2260–2279 (YVLMFLADTVDFIIIVFGFW). Over 2280–2301 (AFGKHSAAADITSSLSEDQVPG) the chain is Extracellular. The chain crosses the membrane as a helical span at residues 2302-2322 (PFLVMVLIQFGTMVVDRALYL). Residues 2323-2326 (RKTV) lie on the Cytoplasmic side of the membrane. The helical transmembrane segment at 2327–2350 (LGKVIFQVILVFGIHFWMFFILPG) threads the bilayer. Residues 2351–2359 (VTERKFSQN) lie on the Extracellular side of the membrane. A helical transmembrane segment spans residues 2360–2382 (LVAQLWYFVKCVYFGLSAYQIRC). Residues 2383 to 2467 (GYPTRVLGNF…YPQPRGQKKK (85 aa)) are Cytoplasmic-facing. The chain crosses the membrane as a helical span at residues 2468–2491 (KAVKYGMGGMIIVLLICIVWFPLL). The Extracellular segment spans residues 2492–2739 (FMSLIKSVAG…PSLGFLAGYG (248 aa)). N2692 is a glycosylation site (N-linked (GlcNAc...) asparagine). The helical transmembrane segment at 2740–2760 (IMGLYASVVLVIGKFVREFFS) threads the bilayer. Topologically, residues 2761-2822 (GISHSIMFEE…MIKWTREKTN (62 aa)) are cytoplasmic.

It belongs to the PIEZO (TC 1.A.75) family. As to quaternary structure, homotrimer; the homotrimer forms a propeller-shaped Piezo channel with a cation-ion conducting pore. Heterotrimeric interaction may occur between PIEZO1 and PIEZO2. Interacts with STOM13. Interacts with TMC7; the interaction inhibits PIEZO2-conducted mechanically activated currents. Interacts with TMC1; the interaction may be part of the MET complex. Interacts with MDFIC (via C-terminus); the interaction prolongs Piezo channel inactivation. Interacts with MDFI (via C-terminus); the interaction prolongs Piezo channel inactivation. Expressed in bladder, colon, and lung, but less abundant in kidney or skin. Strong expression is observed in dorsal root ganglia (DRG) sensory neurons. Expressed in a wide range of cutaneous low-threshold mechanoreceptors (LTMRs), including Merkel cells and Meissner's corpuscles. Expressed in sensory neurons. Expressed in cochlear inner and outer hair cells and vestibular organ hair cells. Expressed in pulmonary neuroepithelial cell bodies. Expressed in bladder urothelium and sensory neurons of the lower urinary tract. Expressed in sensory endings of proprioceptors innervating muscle spindles and Golgi tendon organs.

Its subcellular location is the cell membrane. The catalysed reaction is Ca(2+)(in) = Ca(2+)(out). Its activity is regulated as follows. Regulated by auxillary subunits MDFIC and MDFI. Channel activity is inhibited by TMEM120aa. Phosphatidic acid and lysophosphatidic acid inhibit Piezo2 channel activity. Pore-forming subunit of the mechanosensitive non-specific cation Piezo channel required for rapidly adapting mechanically activated (MA) currents and has a key role in sensing touch and tactile pain. Piezo channels are homotrimeric three-blade propeller-shaped structures that utilize a cap-motion and plug-and-latch mechanism to gate their ion-conducting pathways. Expressed in sensory neurons, is essential for diverse physiological processes, including respiratory control, systemic metabolism, urinary function, and proprioception. Mediates airway stretch sensing, enabling efficient respiration at birth and maintaining normal breathing in adults. It regulates brown and beige adipose tissue morphology and function, preventing systemic hypermetabolism. In the lower urinary tract, acts as a sensor in both the bladder urothelium and innervating sensory neurons and is required for bladder-stretch sensing and urethral micturition reflexes, ensuring proper urinary function. Additionally, Piezo2 serves as the principal mechanotransducer in proprioceptors, facilitating proprioception and coordinated body movements. In inner ear hair cells, PIEZO1/2 subunits may constitute part of the mechanotransducer (MET) non-selective cation channel complex where they may act as pore-forming ion-conducting component in the complex. Required for Merkel-cell mechanotransduction. Plays a major role in light-touch mechanosensation. In Mus musculus (Mouse), this protein is Piezo-type mechanosensitive ion channel component 2.